A 161-amino-acid chain; its full sequence is Peptidyl-prolyl cis-trans isomerase-like 3 (161 aa).

Ser-2 carries the post-translational modification N-acetylserine. Residues Ser-2–Ile-154 form the PPIase cyclophilin-type domain. An Omega-N-methylarginine modification is found at Arg-61.

It belongs to the cyclophilin-type PPIase family. PPIL3 subfamily. As to quaternary structure, identified in the spliceosome C complex.

The enzyme catalyses [protein]-peptidylproline (omega=180) = [protein]-peptidylproline (omega=0). Functionally, PPIases accelerate the folding of proteins. It catalyzes the cis-trans isomerization of proline imidic peptide bonds in oligopeptides. May be involved in pre-mRNA splicing. In Mus musculus (Mouse), this protein is Peptidyl-prolyl cis-trans isomerase-like 3 (Ppil3).